The following is a 298-amino-acid chain: Probable porphobilinogen deaminase (298 aa).

Position 241 is an S-(dipyrrolylmethanemethyl)cysteine (C241).

Belongs to the HMBS family. It depends on dipyrromethane as a cofactor.

The enzyme catalyses 4 porphobilinogen + H2O = hydroxymethylbilane + 4 NH4(+). Its pathway is porphyrin-containing compound metabolism; protoporphyrin-IX biosynthesis; coproporphyrinogen-III from 5-aminolevulinate: step 2/4. Its function is as follows. Tetrapolymerization of the monopyrrole PBG into the hydroxymethylbilane pre-uroporphyrinogen in several discrete steps. This chain is Probable porphobilinogen deaminase, found in Methanopyrus kandleri (strain AV19 / DSM 6324 / JCM 9639 / NBRC 100938).